The primary structure comprises 128 residues: MGISMGKSMLVLLTFLAFASCCIAAYRPSETLCGGELVDTLQFVCGDRGFYFSRPASRVSRRSRGIVEECCFRSCDLALLETYCATPAKSERDVSASLAVLPDNFPRYPVGKFFQYDTWRQSTQRLRR.

Positions 1-24 are cleaved as a signal peptide; it reads MGISMGKSMLVLLTFLAFASCCIA. The b stretch occupies residues 25–52; it reads AYRPSETLCGGELVDTLQFVCGDRGFYF. 3 cysteine pairs are disulfide-bonded: Cys33-Cys71, Cys45-Cys84, and Cys70-Cys75. The c stretch occupies residues 53–64; sequence SRPASRVSRRSR. The interval 65–85 is a; the sequence is GIVEECCFRSCDLALLETYCA. The d stretch occupies residues 86-91; the sequence is TPAKSE. The propeptide at 92–128 is e peptide; that stretch reads RDVSASLAVLPDNFPRYPVGKFFQYDTWRQSTQRLRR.

Belongs to the insulin family. As to quaternary structure, interacts with MYORG; this interaction is required for IGF2 secretion. Interacts with integrins ITGAV:ITGB3 and ITGA6:ITGB4; integrin-binding is required for IGF2 signaling. Proteolytically processed by PCSK4, proIGF2 is cleaved at Arg-128 and Arg-92 to generate big-IGF2 and mature IGF2.

The protein localises to the secreted. In terms of biological role, the insulin-like growth factors possess growth-promoting activity. Major fetal growth hormone in mammals. Plays a key role in regulating fetoplacental development. IGF2 is influenced by placental lactogen. Also involved in tissue differentiation. In adults, involved in glucose metabolism in adipose tissue, skeletal muscle and liver. Acts as a ligand for integrin which is required for IGF2 signaling. Positively regulates myogenic transcription factor MYOD1 function by facilitating the recruitment of transcriptional coactivators, thereby controlling muscle terminal differentiation. Inhibits myoblast differentiation and metabolism via increasing the mitochondrial respiration rate. Functionally, preptin undergoes glucose-mediated co-secretion with insulin, and acts as a physiological amplifier of glucose-mediated insulin secretion. Exhibits osteogenic properties by increasing osteoblast mitogenic activity through phosphoactivation of MAPK1 and MAPK3. The chain is Insulin-like growth factor 2 from Cavia porcellus (Guinea pig).